We begin with the raw amino-acid sequence, 599 residues long: Elongation factor 4 (599 aa).

The region spanning 2–184 is the tr-type G domain; that stretch reads KNIRNFSIIA…RLVRDIPPPQ (183 aa). GTP is bound by residues 14–19 and 131–134; these read DHGKST and NKID.

Belongs to the TRAFAC class translation factor GTPase superfamily. Classic translation factor GTPase family. LepA subfamily.

It is found in the cell inner membrane. It catalyses the reaction GTP + H2O = GDP + phosphate + H(+). In terms of biological role, required for accurate and efficient protein synthesis under certain stress conditions. May act as a fidelity factor of the translation reaction, by catalyzing a one-codon backward translocation of tRNAs on improperly translocated ribosomes. Back-translocation proceeds from a post-translocation (POST) complex to a pre-translocation (PRE) complex, thus giving elongation factor G a second chance to translocate the tRNAs correctly. Binds to ribosomes in a GTP-dependent manner. This chain is Elongation factor 4, found in Salmonella gallinarum (strain 287/91 / NCTC 13346).